Consider the following 275-residue polypeptide: Homeobox protein Hox-C12a (275 aa).

2 disordered regions span residues 101-129 (SRENCSGGGSLKREDRARDTSALTSDHGM) and 148-213 (QLTQ…KRKP). Over residues 155–177 (SCQSMESDSSSSLLNEASKPSSS) the composition is skewed to low complexity. The segment covering 178 to 194 (DTQTLVSPGSHTGTITA) has biased composition (polar residues). The segment at residues 207-266 (TRKKRKPYSKLQLAELEGEFMMNEFITRQRRRELSDRLNLSDQQVKIWFQNRRMKKKRLM) is a DNA-binding region (homeobox).

It belongs to the Abd-B homeobox family.

It is found in the nucleus. In terms of biological role, sequence-specific transcription factor which is part of a developmental regulatory system that provides cells with specific positional identities on the anterior-posterior axis. The protein is Homeobox protein Hox-C12a (hoxc12a) of Takifugu rubripes (Japanese pufferfish).